The chain runs to 434 residues: D-amino acid dehydrogenase (434 aa).

3 to 17 (VVILGSGVVGVASAW) lines the FAD pocket.

This sequence belongs to the DadA oxidoreductase family. FAD is required as a cofactor.

It catalyses the reaction a D-alpha-amino acid + A + H2O = a 2-oxocarboxylate + AH2 + NH4(+). The protein operates within amino-acid degradation; D-alanine degradation; NH(3) and pyruvate from D-alanine: step 1/1. Functionally, oxidative deamination of D-amino acids. The chain is D-amino acid dehydrogenase from Serratia proteamaculans (strain 568).